Here is an 88-residue protein sequence, read N- to C-terminus: Small ribosomal subunit protein uS17 (88 aa).

Belongs to the universal ribosomal protein uS17 family. As to quaternary structure, part of the 30S ribosomal subunit.

Functionally, one of the primary rRNA binding proteins, it binds specifically to the 5'-end of 16S ribosomal RNA. The polypeptide is Small ribosomal subunit protein uS17 (Oenococcus oeni (strain ATCC BAA-331 / PSU-1)).